A 496-amino-acid chain; its full sequence is Aminoacetaldehyde dehydrogenase (496 aa).

Positions 166, 168, 192, 246, 249, and 256 each coordinate NADH. E268 functions as the Proton acceptor in the catalytic mechanism. C269 is an NADH binding site. The active-site Nucleophile is C303. Residues K353 and E398 each coordinate NADH.

It belongs to the aldehyde dehydrogenase family. As to quaternary structure, homotetramer, formed by two symmetrical dimers.

It catalyses the reaction aminoacetaldehyde + NAD(+) + H2O = glycine + NADH + 2 H(+). The catalysed reaction is 3-aminopropanal + NAD(+) + H2O = beta-alanine + NADH + 2 H(+). NAD(+)-dependent aminoaldehyde dehydrogenase highly efficient with protonated aminoacetaldehyde (ACTAL) and 3-aminopropanaldehyde (APAL). Likely participates in a still uncharacterized metabolic pathway present in proteobacteria species, in which ACTAL might be an intermediate, yielding glycine. Highly prefers NAD(+) over NADP(+). Shows very poor activity with acetaldehyde, propanaldehyde, butanaldehyde, pentanaldehyde, dimethylaminoacetaldehyde, trimethylaminoacetaldehyde (betaine aldehyde), trimethylaminobutanaldehyde, short aliphatic hydroxyaldehydes such as 3-hydroxypropanaldehyde and 2-hydroxypropanaldehyde (lactaldehyde), and aromatic aldehydes. The sequence is that of Aminoacetaldehyde dehydrogenase from Pseudomonas aeruginosa (strain ATCC 15692 / DSM 22644 / CIP 104116 / JCM 14847 / LMG 12228 / 1C / PRS 101 / PAO1).